We begin with the raw amino-acid sequence, 21 residues long: Nitrilase (21 aa).

It belongs to the carbon-nitrogen hydrolase superfamily. Nitrilase family.

The catalysed reaction is a nitrile + 2 H2O = a carboxylate + NH4(+). Acts on many kinds of nitrile compounds such as aliphatic, aromatic, and heterocyclic mononitriles or dinitriles. Prefers S-(-)-2-(4'-isobutylphenyl)-propionitrile to R-(+)-2-(4'-isobutylphenyl)-propionitrile as the substrate. The polypeptide is Nitrilase (Acinetobacter sp. (strain AK226)).